The following is a 386-amino-acid chain: MSPDGELVPVDSSAVVTAKRKTSQLSRSWISIDATGQKTVLDVDKHVIMHRVQIHARDLRILDPNLFYPSAILGRERAIVLNLEHIKAIITAEEVLIRDSSDENVIPVLEEFQRRLPVGNEAHGVHGDGDLGEEDESPFEFRALEVALEAICSFLAARTTELEKFAYPALDELTLKISSRNLERVRKLKSAMTRLTARVQKVRDELEQLLDDDGDMADLYLTRKLVGASSSVSVSDEPIWYPTSPTIGSMISRASRVSLVTVRGDDETDVEELEMLLEAYFMQIDSTLNKLTELREYIDDTEDYINIQLDNHRNQLIQLELMLSAGTVCVSVYSMIAGIFGMNIPNTWNHDHGYIFKWVVSLTGTFCIVLFVIILSYARFRGLIGS.

2 helical membrane-spanning segments follow: residues 321-341 (LMLS…GIFG) and 355-375 (IFKW…VIIL). The short motif at 341–343 (GMN) is the Required for magnesium transport activity element.

The protein belongs to the CorA metal ion transporter (MIT) (TC 1.A.35.5) family. Isoform 1 is expressed in the whole plant. Isoform 4 is expressed only in roots and flowers.

It is found in the endoplasmic reticulum membrane. Functionally, low-affinity magnesium transporter that mediates the influx of magnesium. In Arabidopsis thaliana (Mouse-ear cress), this protein is Magnesium transporter MRS2-7 (MRS2-7).